Reading from the N-terminus, the 622-residue chain is Low affinity potassium transport system protein Kup (622 aa).

A run of 12 helical transmembrane segments spans residues 12 to 32, 49 to 69, 101 to 121, 134 to 154, 163 to 183, 213 to 233, 247 to 267, 276 to 296, 337 to 357, 363 to 383, 395 to 415, and 419 to 439; these read ITLA…LYTL, VFGF…LKYL, FLVI…VITP, IIAP…LTLL, GLVG…LAAL, VSFV…ALYA, WFTV…ALLL, PFFL…ATLA, IYIP…IVSF, LAAA…ILST, FLVA…FSAN, and IVSG…VMTT.

It belongs to the HAK/KUP transporter (TC 2.A.72) family.

The protein resides in the cell inner membrane. The enzyme catalyses K(+)(in) + H(+)(in) = K(+)(out) + H(+)(out). Its function is as follows. Responsible for the low-affinity transport of potassium into the cell. Likely operates as a K(+):H(+) symporter. The polypeptide is Low affinity potassium transport system protein Kup (Enterobacter sp. (strain 638)).